A 199-amino-acid chain; its full sequence is Probable GTP-binding protein EngB (199 aa).

The EngB-type G domain maps to 22–196 (NFSEVAFLGR…EDVIINQTLG (175 aa)). GTP-binding positions include 30-37 (GRSNVGKS), 57-61 (GKTQL), 82-85 (DLPG), 152-155 (TKCD), and 175-177 (VSN). The Mg(2+) site is built by Ser37 and Thr59.

This sequence belongs to the TRAFAC class TrmE-Era-EngA-EngB-Septin-like GTPase superfamily. EngB GTPase family. Mg(2+) serves as cofactor.

Functionally, necessary for normal cell division and for the maintenance of normal septation. This is Probable GTP-binding protein EngB from Campylobacter jejuni subsp. doylei (strain ATCC BAA-1458 / RM4099 / 269.97).